Consider the following 169-residue polypeptide: Anaerobic nitrite reductase NSHB2 (169 aa).

Residues 16–166 (SFSEEQEALV…LVAAIKQEMK (151 aa)) form the Globin domain. Positions 49–53 (EVAPS) match the Homodimerization motif. Heme b is bound by residues Ser59, Lys73, His77, Arg107, Thr111, and His112. Residues 119–131 (DAHFEVTRFALLE) carry the Homodimerization motif.

It belongs to the plant globin family. Homodimer. Heme b serves as cofactor. As to expression, expressed in leaves, but not in roots. Present in embryonic organs including embryos, coleoptiles and seminal roots.

It localises to the cytoplasm. Its subcellular location is the nucleus. It catalyses the reaction Fe(III)-heme b-[protein] + nitric oxide + H2O = Fe(II)-heme b-[protein] + nitrite + 2 H(+). Phytoglobin that reduces nitrite to nitric oxide under anoxic conditions (e.g. during flooding or in waterlogged soil). May not function as an oxygen storage or transport protein. Has an unusually high affinity for O(2) through an hexacoordinate heme iron because of a very low dissociation constant. Promotes tolerance to low potassium K(+) conditions. The chain is Anaerobic nitrite reductase NSHB2 from Oryza sativa subsp. japonica (Rice).